A 1067-amino-acid chain; its full sequence is Hemoglobin and hemoglobin-haptoglobin-binding protein B (1067 aa).

The first 24 residues, 1 to 24, serve as a signal peptide directing secretion; sequence MTNFKFSLLACSIAFALNASTAYA. A run of 6 repeats spans residues 26–29, 30–33, 34–37, 38–41, 42–45, and 46–49. The segment at 26–49 is 6 X 4 AA tandem repeats of Q-P-T-N; it reads QPTNQPTNQPTNQPTNQPTNQPTN. A compositionally biased stretch (low complexity) spans 26 to 51; the sequence is QPTNQPTNQPTNQPTNQPTNQPTNQN. The tract at residues 26 to 53 is disordered; sequence QPTNQPTNQPTNQPTNQPTNQPTNQNSN. The TonB box signature appears at 59 to 66; it reads EQINVSGS. One can recognise a TBDR plug domain in the interval 71-196; the sequence is NIKEKKVGET…LGGSVIFETK (126 aa). The region spanning 204–1067 is the TBDR beta-barrel domain; it reads DKDYYLSYKR…NYRMSVQFEF (864 aa). The TonB C-terminal box signature appears at 1050 to 1067; it reads NRFYAPGRNYRMSVQFEF.

It belongs to the TonB-dependent receptor family. Hemoglobin/haptoglobin binding protein subfamily.

Its subcellular location is the cell outer membrane. Its function is as follows. Acts as a receptor for hemoglobin or the hemoglobin/haptoglobin complex of the human host and is required for heme uptake. The sequence is that of Hemoglobin and hemoglobin-haptoglobin-binding protein B (hgbB) from Haemophilus influenzae.